Consider the following 209-residue polypeptide: Uridine kinase (209 aa).

12-19 (GGSGSGKT) serves as a coordination point for ATP.

This sequence belongs to the uridine kinase family.

It localises to the cytoplasm. The enzyme catalyses uridine + ATP = UMP + ADP + H(+). It catalyses the reaction cytidine + ATP = CMP + ADP + H(+). The protein operates within pyrimidine metabolism; CTP biosynthesis via salvage pathway; CTP from cytidine: step 1/3. Its pathway is pyrimidine metabolism; UMP biosynthesis via salvage pathway; UMP from uridine: step 1/1. This Listeria monocytogenes serotype 4b (strain CLIP80459) protein is Uridine kinase.